Here is a 155-residue protein sequence, read N- to C-terminus: Microsomal glutathione S-transferase 1 (155 aa).

Residues 3–9 (DLTQVMD) are Lumenal-facing. A helical membrane pass occupies residues 10–33 (DEVFMAFASYATIILSKMMLMSTA). Over 34-62 (TAFYRLTRKVFANPEDCVAFGKGENAKKY) the chain is Cytoplasmic. Glutathione is bound at residue Arg-38. N6-acetyllysine is present on residues Lys-42, Lys-55, and Lys-60. Residues 63 to 96 (LRTDDRVERVRRAHLNDLENIIPFLGIGLLYSLS) form a helical membrane-spanning segment. 4 residues coordinate glutathione: Arg-73, Arg-74, His-76, and Glu-81. Over 97-99 (GPD) the chain is Lumenal. The helical transmembrane segment at 100–123 (PSTAILHFRLFVGARIYHTIAYLT) threads the bilayer. Glutathione is bound at residue Tyr-121. The Cytoplasmic portion of the chain corresponds to 124-128 (PLPQP). The chain crosses the membrane as a helical span at residues 129-148 (NRALSFFVGYGVTLSMAYRL). The Lumenal segment spans residues 149–155 (LKSKLYL).

It belongs to the MAPEG family. As to quaternary structure, homotrimer; The trimer binds only one molecule of glutathione. In terms of tissue distribution, highly expressed in liver.

It is found in the endoplasmic reticulum membrane. The protein resides in the mitochondrion outer membrane. The enzyme catalyses RX + glutathione = an S-substituted glutathione + a halide anion + H(+). Conjugation of reduced glutathione to a wide number of exogenous and endogenous hydrophobic electrophiles. The polypeptide is Microsomal glutathione S-transferase 1 (MGST1) (Homo sapiens (Human)).